The chain runs to 354 residues: MTELKNDRYLRALLRQPVDVTPVWMMRQAGRYLPEYKATRAQAGDFMSLCKNAELACEVTLQPLRRYPLDAAILFSDILTIPDAMGLGLYFEAGEGPRFTAPVTCKADVEKLPIPDPEGELGYVMNAVRTIRRELKGEVPLIGFSGSPWTLATYMVEGGSSKAFTVIKKMMYADPQALHLLLDKLAKSVTLYLNAQIKAGAQSVMIFDTWGGVLTGRDYQQFSLYYMHKIVDGLLRENDGRRVPVTLFTKGGGQWLEAMAETGCDALGLDWTTDIADARRRVGHKVALQGNMDPSMLYAPPARIEDEVATILAGFGQGEGHVFNLGHGIHQDVPPEHAGAFVEAVHRLSAQYHN.

Substrate contacts are provided by residues 27-31 (RQAGR), Asp77, Tyr154, Thr209, and His327.

This sequence belongs to the uroporphyrinogen decarboxylase family. In terms of assembly, homodimer.

It is found in the cytoplasm. It carries out the reaction uroporphyrinogen III + 4 H(+) = coproporphyrinogen III + 4 CO2. The protein operates within porphyrin-containing compound metabolism; protoporphyrin-IX biosynthesis; coproporphyrinogen-III from 5-aminolevulinate: step 4/4. Functionally, catalyzes the decarboxylation of four acetate groups of uroporphyrinogen-III to yield coproporphyrinogen-III. This Salmonella paratyphi B (strain ATCC BAA-1250 / SPB7) protein is Uroporphyrinogen decarboxylase.